We begin with the raw amino-acid sequence, 255 residues long: MRILVTNDDGIHAPGLDACARIAAALSDDVWVVAPETDQSGVAHSLSLNDPLRLRKVAAQRYAVKGTPTDCVIMAVRHVLIDNPPDLILSGVNRGQNIAEDVSYSGTVAGAIEGTILGIPSIALSQAFGPQTRDNPSYQTAETHGPDVIRTLLAEGIPAGVLINVNFPDRTPDQVAGIAVTAQGRRDQKLMRIDPRKDGRGNDYFWIAFERRSADTVPGSDLRALDEGRISVTPLRVEQTDEPMMTRLAQVFEAR.

Positions 8, 9, 40, and 93 each coordinate a divalent metal cation.

It belongs to the SurE nucleotidase family. It depends on a divalent metal cation as a cofactor.

It is found in the cytoplasm. The catalysed reaction is a ribonucleoside 5'-phosphate + H2O = a ribonucleoside + phosphate. Nucleotidase that shows phosphatase activity on nucleoside 5'-monophosphates. The polypeptide is 5'-nucleotidase SurE (Azorhizobium caulinodans (strain ATCC 43989 / DSM 5975 / JCM 20966 / LMG 6465 / NBRC 14845 / NCIMB 13405 / ORS 571)).